A 253-amino-acid chain; its full sequence is Probable transcriptional regulatory protein A1G_04400 (253 aa).

The segment at 1 to 21 (MAGHSKFKNIQHRKGAQDKKR) is disordered.

This sequence belongs to the TACO1 family.

The protein localises to the cytoplasm. The protein is Probable transcriptional regulatory protein A1G_04400 of Rickettsia rickettsii (strain Sheila Smith).